We begin with the raw amino-acid sequence, 284 residues long: MKKLTTLLLASTLLIAACGNDDSKKDDSKTSKKDDGVKAELKQATKAYDKYTDEQLNEFLKGTEKFVKAIENNDMAQAKALYPKVRMYYERSEPVAEAFGDLDPKIDARLADMKEEKKEKEWSGYHKIEKALYEDKKIDDVTKKDAQQLLKNAKELHAKADTLDITPKLMLQGSVDLLNEVATSKITGEEEIYSHTDLYDFKANVEGAQKIYDLFKPILEKKDKKLSDDIQMNFDKVNKLLDKYKDNNGGYESFEKVSKKDRKAFADAVNALGEPLSKMAVITE.

Positions 1-17 are cleaved as a signal peptide; that stretch reads MKKLTTLLLASTLLIAA. Cys18 is lipidated: N-palmitoyl cysteine. The S-diacylglycerol cysteine moiety is linked to residue Cys18.

Belongs to the EfeM/EfeO family.

It localises to the cell membrane. This Staphylococcus aureus (strain MRSA252) protein is Efem/EfeO family lipoprotein.